The chain runs to 207 residues: MAVDYSLYLVTDRILVGPKDFLLSIRKALEGGVTLLQLREKETNSREFYDIGVKVKELAAEFGVPLIINDRVDLALALDADGVHVGQQDLPLAKVRNIIGPDKILGYSVSSLEEALQGERMGADYLGAGPVFPTGSKKDAAEAIGLAKLKEIKAGVSLPVVGIGGIGAANLRVVKETGIDGVSVISAILSQEDPCAAAKGLVDLWRN.

4-amino-2-methyl-5-(diphosphooxymethyl)pyrimidine contacts are provided by residues 37-41 and Asn-69; that span reads QLREK. 2 residues coordinate Mg(2+): Asp-70 and Asp-89. Ser-108 is a 4-amino-2-methyl-5-(diphosphooxymethyl)pyrimidine binding site. 134–136 contributes to the 2-[(2R,5Z)-2-carboxy-4-methylthiazol-5(2H)-ylidene]ethyl phosphate binding site; the sequence is TGS. Lys-137 provides a ligand contact to 4-amino-2-methyl-5-(diphosphooxymethyl)pyrimidine. 2-[(2R,5Z)-2-carboxy-4-methylthiazol-5(2H)-ylidene]ethyl phosphate is bound by residues Gly-165 and 185–186; that span reads IS.

Belongs to the thiamine-phosphate synthase family. The cofactor is Mg(2+).

The catalysed reaction is 2-[(2R,5Z)-2-carboxy-4-methylthiazol-5(2H)-ylidene]ethyl phosphate + 4-amino-2-methyl-5-(diphosphooxymethyl)pyrimidine + 2 H(+) = thiamine phosphate + CO2 + diphosphate. It catalyses the reaction 2-(2-carboxy-4-methylthiazol-5-yl)ethyl phosphate + 4-amino-2-methyl-5-(diphosphooxymethyl)pyrimidine + 2 H(+) = thiamine phosphate + CO2 + diphosphate. It carries out the reaction 4-methyl-5-(2-phosphooxyethyl)-thiazole + 4-amino-2-methyl-5-(diphosphooxymethyl)pyrimidine + H(+) = thiamine phosphate + diphosphate. It functions in the pathway cofactor biosynthesis; thiamine diphosphate biosynthesis; thiamine phosphate from 4-amino-2-methyl-5-diphosphomethylpyrimidine and 4-methyl-5-(2-phosphoethyl)-thiazole: step 1/1. Functionally, condenses 4-methyl-5-(beta-hydroxyethyl)thiazole monophosphate (THZ-P) and 2-methyl-4-amino-5-hydroxymethyl pyrimidine pyrophosphate (HMP-PP) to form thiamine monophosphate (TMP). The chain is Thiamine-phosphate synthase from Desulfitobacterium hafniense (strain DSM 10664 / DCB-2).